Consider the following 242-residue polypeptide: uncharacterized protein (242 aa).

8–15 (TGASGGIG) contributes to the NADP(+) binding site. Substrate is bound at residue Ser-137. Tyr-150 (proton acceptor) is an active-site residue.

It belongs to the short-chain dehydrogenases/reductases (SDR) family.

This is an uncharacterized protein from Bacillus subtilis (strain 168).